A 139-amino-acid polypeptide reads, in one-letter code: uncharacterized protein (139 aa).

This is an uncharacterized protein from Invertebrate iridescent virus 3 (IIV-3).